Reading from the N-terminus, the 141-residue chain is Large ribosomal subunit protein uL11 (141 aa).

The protein belongs to the universal ribosomal protein uL11 family. As to quaternary structure, part of the ribosomal stalk of the 50S ribosomal subunit. Interacts with L10 and the large rRNA to form the base of the stalk. L10 forms an elongated spine to which L12 dimers bind in a sequential fashion forming a multimeric L10(L12)X complex. One or more lysine residues are methylated.

In terms of biological role, forms part of the ribosomal stalk which helps the ribosome interact with GTP-bound translation factors. In Synechococcus elongatus (strain ATCC 33912 / PCC 7942 / FACHB-805) (Anacystis nidulans R2), this protein is Large ribosomal subunit protein uL11.